Consider the following 491-residue polypeptide: Glutamyl-tRNA(Gln) amidotransferase subunit A (491 aa).

Catalysis depends on charge relay system residues Lys-79 and Ser-158. Residue Ser-182 is the Acyl-ester intermediate of the active site.

It belongs to the amidase family. GatA subfamily. As to quaternary structure, heterotrimer of A, B and C subunits.

It catalyses the reaction L-glutamyl-tRNA(Gln) + L-glutamine + ATP + H2O = L-glutaminyl-tRNA(Gln) + L-glutamate + ADP + phosphate + H(+). Allows the formation of correctly charged Gln-tRNA(Gln) through the transamidation of misacylated Glu-tRNA(Gln) in organisms which lack glutaminyl-tRNA synthetase. The reaction takes place in the presence of glutamine and ATP through an activated gamma-phospho-Glu-tRNA(Gln). The protein is Glutamyl-tRNA(Gln) amidotransferase subunit A of Anaplasma phagocytophilum (strain HZ).